We begin with the raw amino-acid sequence, 346 residues long: MLELHRVSKSFNGRTVLSDIHLTLENSRRTAIVGPSGSGKTTLLRLIAGFETPDTGVITLNGQTLCDNGFSVPAHQRRIGYVPQDGALFPHLCIADNIAFGLKGSKAEKQKRVDELMALVSLPTHLQKHSPHEISGGQQQRVALARALAQRPALMLLDEPFSALDTGLRAATRKAVMDVLQQANVASILVTHDQGEALSFADRVVVMREGQLSQSGSPWALYHQPNSEDIATFLGETLILNAQIDGGKADCLLGRIAVDRPTANGRVRIMLRPEQITIQDTEITSTAHMRATIRNVEFSGFVSTLTLRIHNAEADVIELKTVSHAAFIVGQQVSLSVNGAAHVFSQ.

Residues 2–234 (LELHRVSKSF…PNSEDIATFL (233 aa)) form the ABC transporter domain. 34–41 (GPSGSGKT) serves as a coordination point for ATP.

It belongs to the ABC transporter superfamily. Fe(3+) ion importer (TC 3.A.1.10) family. The complex is composed of two ATP-binding proteins (FbpC), two transmembrane proteins (FbpB) and a solute-binding protein (FbpA).

Its subcellular location is the cell inner membrane. It catalyses the reaction Fe(3+)(out) + ATP + H2O = Fe(3+)(in) + ADP + phosphate + H(+). Functionally, part of the ABC transporter complex FbpABC involved in Fe(3+) ions import. Responsible for energy coupling to the transport system. The chain is Fe(3+) ions import ATP-binding protein FbpC 2 from Pectobacterium atrosepticum (strain SCRI 1043 / ATCC BAA-672) (Erwinia carotovora subsp. atroseptica).